Consider the following 524-residue polypeptide: 2-isopropylmalate synthase (524 aa).

The region spanning 5–267 is the Pyruvate carboxyltransferase domain; sequence VIIFDTTLRD…HTNIRHSEIH (263 aa). 4 residues coordinate Mn(2+): D14, H202, H204, and N238. The tract at residues 392 to 524 is regulatory domain; it reads KLEYLGVQSG…KTDKINTESV (133 aa).

It belongs to the alpha-IPM synthase/homocitrate synthase family. LeuA type 1 subfamily. In terms of assembly, homodimer. Mn(2+) is required as a cofactor.

The protein resides in the cytoplasm. It carries out the reaction 3-methyl-2-oxobutanoate + acetyl-CoA + H2O = (2S)-2-isopropylmalate + CoA + H(+). It participates in amino-acid biosynthesis; L-leucine biosynthesis; L-leucine from 3-methyl-2-oxobutanoate: step 1/4. Its function is as follows. Catalyzes the condensation of the acetyl group of acetyl-CoA with 3-methyl-2-oxobutanoate (2-ketoisovalerate) to form 3-carboxy-3-hydroxy-4-methylpentanoate (2-isopropylmalate). This chain is 2-isopropylmalate synthase, found in Aeromonas salmonicida (strain A449).